The chain runs to 20 residues: Antimicrobial peptide EP-20 (20 aa).

The tract at residues 1–20 (EGPVGLADPDGPASAPLGAP) is disordered.

It is found in the secreted. Functionally, the synthetic peptide inhibits growth of fungus P.capsici and partially that of V.dahliae, F.graminearum and F.omysporum. This Xenorhabdus budapestensis protein is Antimicrobial peptide EP-20.